The primary structure comprises 28 residues: Cyclotide vodo I2 (28 aa).

3 disulfides stabilise this stretch: Cys-4-Cys-18, Cys-8-Cys-20, and Cys-13-Cys-25.

Post-translationally, this is a cyclic peptide. Contains 3 disulfide bonds.

Functionally, probably participates in a plant defense mechanism. The polypeptide is Cyclotide vodo I2 (Viola odorata (Sweet violet)).